The sequence spans 1275 residues: Membrane-associated guanylate kinase, WW and PDZ domain-containing protein 2 (1275 aa).

The region spanning 17–101 (ESVIGRNPEG…PLRLKCVKQG (85 aa)) is the PDZ 1 domain. Positions 109–283 (RHYLNLRFQK…PVYSQPEELK (175 aa)) constitute a Guanylate kinase-like domain. The disordered stretch occupies residues 203 to 305 (LPGATPSAEG…ENEDSDPLPD (103 aa)). The segment covering 280-295 (EELKDQMDDTKPTKPE) has biased composition (basic and acidic residues). WW domains are found at residues 301–334 (DPLP…DPRL) and 347–380 (NELP…NPVL). The segment at 301–380 (DPLPDNWEMA…RRTQFENPVL (80 aa)) is interaction with DDN. At tyrosine 361 the chain carries Phosphotyrosine. PDZ domains follow at residues 425 to 509 (STTL…CRGY) and 604 to 682 (TLTI…HRGG). Phosphoserine is present on serine 685. Residues 698-740 (ENQGSPQTSLSAPAVPQNLPFPPALHRSSFPDSTEAFDPRKPD) are disordered. Positions 699–708 (NQGSPQTSLS) are enriched in polar residues. One can recognise a PDZ 4 domain in the interval 777-859 (DVHLRRMESG…NGQVNLTVRR (83 aa)). Position 826 is a phosphotyrosine (tyrosine 826). Residues 868-912 (CPENGRSPGSVSTHHSSPRSDYATYSNSNHAAPSSNASPPEGFAS) are disordered. Phosphoserine occurs at positions 883 and 884. Residues 893–907 (SNSNHAAPSSNASPP) show a composition bias toward low complexity. In terms of domain architecture, PDZ 5 spans 919 to 1009 (DVVIHRKENE…SVTLRIIPQE (91 aa)). A compositionally biased stretch (polar residues) spans 1010 to 1040 (ELNSPTSAPSSEKQSPMAQQHSPLAQQSPLA). Positions 1010-1128 (ELNSPTSAPS…PDTRQYPLSD (119 aa)) are disordered. A Phosphoserine modification is found at serine 1013. Positions 1067–1083 (NSYRSEVKARQDVKPDI) are enriched in basic and acidic residues. Residues 1139–1221 (TVDMEKGAKG…RVRLLLKRGT (83 aa)) form the PDZ 6 domain.

It belongs to the MAGUK family. In terms of assembly, interacts (via its WW domains) with DRPLA. Interacts (via its second PDZ domain) with PTEN (via unphosphorylated C-terminus); this interaction diminishes the degradation rate of PTEN. Interacts (via guanylate kinase domain) with DLGAP1. Interacts (via the PDZ domains) with GRIN2A, GRID2 and NLGN1. Interacts with CTNND2, CTNNB1 and MAGUIN-1. Interacts with ACVR2A, SMAD2 and SMAD3. Part of a complex consisting of MAGI2/ARIP1, ACVR2A, ACVR1B and SMAD3. May interact with HTR2A. Interacts with RAPGEF2. Identified in a complex with ACTN4, CASK, IQGAP1, NPHS1, SPTAN1 and SPTBN1. Interacts with DDN. Found in a complex, at least composed of KIDINS220, MAGI2, NTRK1 and RAPGEF2; the complex is mainly formed at late endosomes in a NGF-dependent manner. Interacts with RAPGEF2; the interaction occurs before or after nerve growth factor (NGF) stimulation. Interacts (via PDZ domain) with KIDINS220 (via C-terminal domain). Interacts with IGSF9 and HTR4. Interacts with DLL1. Found in a complex with IGSF9B and NLGN2; the interaction with IGSF9B is mediated via the PDZ 5 and PDZ 6 domains, while the interaction with NLGN2 is mediated via the WW1, WW2 and PDZ2 domains. Interacts (via PDZ 6 domain) with USH1G (via SAM domain); the interaction is triggered by phosphorylation of USH1G by CK2 and negatively regulates MAGI2-mediated endocytosis. As to expression, expressed throughout the retina except in the nuclear layers and the photoreceptor outer segments (at protein level). Highest retinal expression is observed in the outer plexiform layer, the outer limiting membrane and the inner segment of photoreceptor cells (at protein level). Expressed in brain.

The protein resides in the cytoplasm. It localises to the late endosome. It is found in the synapse. Its subcellular location is the synaptosome. The protein localises to the cell membrane. The protein resides in the cytoskeleton. It localises to the microtubule organizing center. It is found in the centrosome. Its subcellular location is the cell projection. The protein localises to the cilium. The protein resides in the centriole. It localises to the photoreceptor inner segment. It is found in the photoreceptor outer segment. Functionally, seems to act as a scaffold molecule at synaptic junctions by assembling neurotransmitter receptors and cell adhesion proteins. Plays a role in nerve growth factor (NGF)-induced recruitment of RAPGEF2 to late endosomes and neurite outgrowth. May play a role in regulating activin-mediated signaling in neuronal cells. Enhances the ability of PTEN to suppress AKT1 activation. Plays a role in receptor-mediated clathrin-dependent endocytosis which is required for ciliogenesis. The sequence is that of Membrane-associated guanylate kinase, WW and PDZ domain-containing protein 2 (Magi2) from Mus musculus (Mouse).